We begin with the raw amino-acid sequence, 123 residues long: Small ribosomal subunit protein uS11 (123 aa).

It belongs to the universal ribosomal protein uS11 family. In terms of assembly, part of the 30S ribosomal subunit. Interacts with proteins S7 and S18. Binds to IF-3.

Located on the platform of the 30S subunit, it bridges several disparate RNA helices of the 16S rRNA. Forms part of the Shine-Dalgarno cleft in the 70S ribosome. The sequence is that of Small ribosomal subunit protein uS11 from Coxiella burnetii (strain CbuK_Q154) (Coxiella burnetii (strain Q154)).